A 213-amino-acid chain; its full sequence is Protein Syd (213 aa).

Belongs to the Syd family.

Its subcellular location is the cell inner membrane. Interacts with the SecY protein in vivo. May bind preferentially to an uncomplexed state of SecY, thus functioning either as a chelating agent for excess SecY in the cell or as a regulatory factor that negatively controls the translocase function. The chain is Protein Syd from Shewanella pealeana (strain ATCC 700345 / ANG-SQ1).